Here is a 449-residue protein sequence, read N- to C-terminus: tRNA-2-methylthio-N(6)-dimethylallyladenosine synthase (449 aa).

The MTTase N-terminal domain occupies Asp-7–Gln-124. Residues Cys-16, Cys-52, Cys-87, Cys-163, Cys-167, and Cys-170 each contribute to the [4Fe-4S] cluster site. Residues Arg-149 to Ser-379 form the Radical SAM core domain. One can recognise a TRAM domain in the interval Ser-382–Ile-445.

The protein belongs to the methylthiotransferase family. MiaB subfamily. In terms of assembly, monomer. The cofactor is [4Fe-4S] cluster.

Its subcellular location is the cytoplasm. The enzyme catalyses N(6)-dimethylallyladenosine(37) in tRNA + (sulfur carrier)-SH + AH2 + 2 S-adenosyl-L-methionine = 2-methylsulfanyl-N(6)-dimethylallyladenosine(37) in tRNA + (sulfur carrier)-H + 5'-deoxyadenosine + L-methionine + A + S-adenosyl-L-homocysteine + 2 H(+). In terms of biological role, catalyzes the methylthiolation of N6-(dimethylallyl)adenosine (i(6)A), leading to the formation of 2-methylthio-N6-(dimethylallyl)adenosine (ms(2)i(6)A) at position 37 in tRNAs that read codons beginning with uridine. In Chlorobium chlorochromatii (strain CaD3), this protein is tRNA-2-methylthio-N(6)-dimethylallyladenosine synthase.